The following is a 342-amino-acid chain: Dihydroorotate dehydrogenase (quinone) (342 aa).

Residues 60-64 (AGLDK) and T84 each bind FMN. K64 lines the substrate pocket. 109-113 (NRMGF) contributes to the substrate binding site. Residues N137 and N170 each contribute to the FMN site. Residue N170 participates in substrate binding. The active-site Nucleophile is S173. Residue N175 coordinates substrate. Positions 215 and 243 each coordinate FMN. 244–245 (NT) contributes to the substrate binding site. FMN is bound by residues G266, G295, and 316 to 317 (YS).

This sequence belongs to the dihydroorotate dehydrogenase family. Type 2 subfamily. As to quaternary structure, monomer. It depends on FMN as a cofactor.

Its subcellular location is the cell membrane. It catalyses the reaction (S)-dihydroorotate + a quinone = orotate + a quinol. The protein operates within pyrimidine metabolism; UMP biosynthesis via de novo pathway; orotate from (S)-dihydroorotate (quinone route): step 1/1. Its function is as follows. Catalyzes the conversion of dihydroorotate to orotate with quinone as electron acceptor. This is Dihydroorotate dehydrogenase (quinone) from Nitrosomonas eutropha (strain DSM 101675 / C91 / Nm57).